A 305-amino-acid polypeptide reads, in one-letter code: Triplex capsid protein 2 (305 aa).

The protein belongs to the herpesviridae TRX2 protein family. In terms of assembly, interacts with TRX1 and major capisd protein/MCP.

The protein localises to the virion. It localises to the host nucleus. Functionally, structural component of the T=16 icosahedral capsid. The capsid is composed of pentamers and hexamers of major capsid protein/MCP, which are linked together by heterotrimers called triplexes. These triplexes are formed by a single molecule of triplex protein 1/TRX1 and two copies of triplex protein 2/TRX2. Additionally, TRX1 is required for efficient transport of TRX2 to the nucleus, which is the site of capsid assembly. This chain is Triplex capsid protein 2, found in Homo sapiens (Human).